The sequence spans 568 residues: C6 finger domain transcription factor BOA13 (568 aa).

The segment at residues 14-41 is a DNA-binding region (zn(2)-C6 fungal-type); it reads CNECHASKVRCSGERTGCRRCVYNQQKC. Disordered stretches follow at residues 92-114, 207-278, and 467-490; these read EANG…EGIT, ATSS…HHNH, and RSRS…FSNP. The span at 242 to 259 shows a compositional bias: basic and acidic residues; that stretch reads HSDLSEKQAQHAQNDLRW. Residues 260 to 274 show a composition bias toward polar residues; it reads RSQSQSYKRPTISTQ. Low complexity predominate over residues 470-490; sequence SLSTPSPRNTPSTSNSPFSNP.

The protein localises to the nucleus. In terms of biological role, transcription factor that probably regulates the gene clusters that mediates the biosynthesis of botcinin acid and its botcinin derivatives, acetate-derived polyketides that contribute to virulence when combined with the sesquiterpene botrydial. Botcinin acid and its derivatives have been shown to induce chlorosis and necrosis during host plant infection, but also have antifungal activities. The chain is C6 finger domain transcription factor BOA13 from Botryotinia fuckeliana (strain B05.10) (Noble rot fungus).